The chain runs to 314 residues: Homoserine kinase (314 aa).

95 to 105 (PHSRGLGSSAA) is a binding site for ATP.

This sequence belongs to the GHMP kinase family. Homoserine kinase subfamily.

The protein resides in the cytoplasm. It catalyses the reaction L-homoserine + ATP = O-phospho-L-homoserine + ADP + H(+). The protein operates within amino-acid biosynthesis; L-threonine biosynthesis; L-threonine from L-aspartate: step 4/5. In terms of biological role, catalyzes the ATP-dependent phosphorylation of L-homoserine to L-homoserine phosphate. This chain is Homoserine kinase, found in Mycobacterium sp. (strain JLS).